Reading from the N-terminus, the 113-residue chain is Holo-[acyl-carrier-protein] synthase (113 aa).

2 residues coordinate Mg(2+): Asp-8 and Glu-57.

It belongs to the P-Pant transferase superfamily. AcpS family. The cofactor is Mg(2+).

Its subcellular location is the cytoplasm. The enzyme catalyses apo-[ACP] + CoA = holo-[ACP] + adenosine 3',5'-bisphosphate + H(+). Functionally, transfers the 4'-phosphopantetheine moiety from coenzyme A to a Ser of acyl-carrier-protein. This Thermodesulfovibrio yellowstonii (strain ATCC 51303 / DSM 11347 / YP87) protein is Holo-[acyl-carrier-protein] synthase.